The chain runs to 820 residues: MRLHESSSPFVCILVLSCFFLSVSLAQERAFFSGKLNDSETIVSSFRTFRFGFFSPVNSTSRYAGIWYNSVSVQTVIWVANKDKPINDSSGVISVSQDGNLVVTDGQRRVLWSTNVSTQASANSTVAELLDSGNLVLKEASSDAYLWESFKYPTDSWLPNMLVGTNARIGGGNVTITSWKSPSDPSPGSYTAALVLAAYPELFIMNNNNNNSTVWRSGPWNGQMFNGLPDVYAGVFLYRFIVNDDTNGSVTMSYANDSTLRYFYMDYRGSVIRRDWSETRRNWTVGLQVPATECDNYRRCGEFATCNPRKNPLCSCIRGFRPRNLIEWNNGNWSGGCTRRVPLQCERQNNNGSADGFLRLRRMKLPDFARRSEASEPECLRTCLQTCSCIAAAHGLGYGCMIWNGSLVDSQELSASGLDLYIRLAHSEIKTKDKRPILIGTILAGGIFVVAACVLLARRIVMKKRAKKKGRDAEQIFERVEALAGGNKGKLKELPLFEFQVLAAATNNFSLRNKLGQGGFGPVYKGKLQEGQEIAVKRLSRASGQGLEELVNEVVVISKLQHRNLVKLLGCCIAGEERMLVYEFMPKKSLDYYLFDSRRAKLLDWKTRFNIINGICRGLLYLHRDSRLRIIHRDLKASNILLDENLIPKISDFGLARIFPGNEDEANTRRVVGTYGYMAPEYAMGGLFSEKSDVFSLGVILLEIISGRRNSNSTLLAYVWSIWNEGEINSLVDPEIFDLLFEKEIHKCIHIGLLCVQEAANDRPSVSTVCSMLSSEIADIPEPKQPAFISRNNVPEAESSENSDLKDSINNVTITDVTGR.

The first 26 residues, 1-26 (MRLHESSSPFVCILVLSCFFLSVSLA), serve as a signal peptide directing secretion. One can recognise a Bulb-type lectin domain in the interval 27 to 150 (QERAFFSGKL…SSDAYLWESF (124 aa)). The Extracellular segment spans residues 27 to 436 (QERAFFSGKL…SEIKTKDKRP (410 aa)). Residues asparagine 37, asparagine 58, asparagine 87, asparagine 115, asparagine 123, asparagine 173, asparagine 211, asparagine 247, asparagine 256, and asparagine 282 are each glycosylated (N-linked (GlcNAc...) asparagine). The 37-residue stretch at 290–326 (PATECDNYRRCGEFATCNPRKNPLCSCIRGFRPRNLI) folds into the EGF-like; atypical domain. Disulfide bonds link cysteine 294–cysteine 306 and cysteine 300–cysteine 314. Residues asparagine 332 and asparagine 351 are each glycosylated (N-linked (GlcNAc...) asparagine). The PAN domain occupies 345 to 425 (CERQNNNGSA…SGLDLYIRLA (81 aa)). 2 disulfide bridges follow: cysteine 379/cysteine 400 and cysteine 383/cysteine 389. Asparagine 404 is a glycosylation site (N-linked (GlcNAc...) asparagine). The helical transmembrane segment at 437–457 (ILIGTILAGGIFVVAACVLLA) threads the bilayer. Over 458 to 820 (RRIVMKKRAK…NVTITDVTGR (363 aa)) the chain is Cytoplasmic. The region spanning 509 to 788 (FSLRNKLGQG…DIPEPKQPAF (280 aa)) is the Protein kinase domain. ATP-binding positions include 515-523 (LGQGGFGPV) and lysine 537. A caM-binding region spans residues 598-615 (RRAKLLDWKTRFNIINGI). The active-site Proton acceptor is the aspartate 634.

It belongs to the protein kinase superfamily. Ser/Thr protein kinase family.

The protein resides in the cell membrane. It catalyses the reaction L-seryl-[protein] + ATP = O-phospho-L-seryl-[protein] + ADP + H(+). It carries out the reaction L-threonyl-[protein] + ATP = O-phospho-L-threonyl-[protein] + ADP + H(+). In Arabidopsis thaliana (Mouse-ear cress), this protein is G-type lectin S-receptor-like serine/threonine-protein kinase At1g11300.